The following is a 180-amino-acid chain: Large ribosomal subunit protein uL6 (180 aa).

Belongs to the universal ribosomal protein uL6 family. In terms of assembly, part of the 50S ribosomal subunit.

This protein binds to the 23S rRNA, and is important in its secondary structure. It is located near the subunit interface in the base of the L7/L12 stalk, and near the tRNA binding site of the peptidyltransferase center. The protein is Large ribosomal subunit protein uL6 of Borrelia garinii subsp. bavariensis (strain ATCC BAA-2496 / DSM 23469 / PBi) (Borreliella bavariensis).